The following is a 262-amino-acid chain: Phosphatidylglycerol--prolipoprotein diacylglyceryl transferase (262 aa).

The next 4 membrane-spanning stretches (helical) occupy residues 17 to 37, 57 to 77, 95 to 115, and 119 to 139; these read LAIHWYGLMYLIGFALVYALG, LIFYSVLGVVLGGRLGYVLFY, GGMSFHGGLIGVIVVMLLFAH, and LGFFTVSDFIAPLIPLGLAAG. Residue Arg-140 coordinates a 1,2-diacyl-sn-glycero-3-phospho-(1'-sn-glycerol). A run of 3 helical transmembrane segments spans residues 173 to 193, 200 to 220, and 227 to 247; these read PSQLYELGLEGIVLFALLWWY, AGQVSAMFLMGYGAFRFLVEF, and FLGLLAAGLSMGQWLSIPMVL.

This sequence belongs to the Lgt family.

It is found in the cell inner membrane. It catalyses the reaction L-cysteinyl-[prolipoprotein] + a 1,2-diacyl-sn-glycero-3-phospho-(1'-sn-glycerol) = an S-1,2-diacyl-sn-glyceryl-L-cysteinyl-[prolipoprotein] + sn-glycerol 1-phosphate + H(+). It functions in the pathway protein modification; lipoprotein biosynthesis (diacylglyceryl transfer). Functionally, catalyzes the transfer of the diacylglyceryl group from phosphatidylglycerol to the sulfhydryl group of the N-terminal cysteine of a prolipoprotein, the first step in the formation of mature lipoproteins. This chain is Phosphatidylglycerol--prolipoprotein diacylglyceryl transferase, found in Bordetella bronchiseptica (strain ATCC BAA-588 / NCTC 13252 / RB50) (Alcaligenes bronchisepticus).